Here is a 290-residue protein sequence, read N- to C-terminus: 33 kDa chaperonin (290 aa).

2 cysteine pairs are disulfide-bonded: cysteine 231/cysteine 233 and cysteine 263/cysteine 266.

This sequence belongs to the HSP33 family. Under oxidizing conditions two disulfide bonds are formed involving the reactive cysteines. Under reducing conditions zinc is bound to the reactive cysteines and the protein is inactive.

It is found in the cytoplasm. Its function is as follows. Redox regulated molecular chaperone. Protects both thermally unfolding and oxidatively damaged proteins from irreversible aggregation. Plays an important role in the bacterial defense system toward oxidative stress. The polypeptide is 33 kDa chaperonin (Thermotoga petrophila (strain ATCC BAA-488 / DSM 13995 / JCM 10881 / RKU-1)).